We begin with the raw amino-acid sequence, 699 residues long: DNA ligase (699 aa).

The disordered stretch occupies residues M1 to R20. Residues D43–D47, S92–L93, and E126 each bind NAD(+). The active-site N6-AMP-lysine intermediate is K128. NAD(+) is bound by residues R149, E185, K301, and K325. Positions 419, 422, 443, and 449 each coordinate Zn(2+). The BRCT domain occupies A621–E699.

The protein belongs to the NAD-dependent DNA ligase family. LigA subfamily. The cofactor is Mg(2+). It depends on Mn(2+) as a cofactor.

The enzyme catalyses NAD(+) + (deoxyribonucleotide)n-3'-hydroxyl + 5'-phospho-(deoxyribonucleotide)m = (deoxyribonucleotide)n+m + AMP + beta-nicotinamide D-nucleotide.. Functionally, DNA ligase that catalyzes the formation of phosphodiester linkages between 5'-phosphoryl and 3'-hydroxyl groups in double-stranded DNA using NAD as a coenzyme and as the energy source for the reaction. It is essential for DNA replication and repair of damaged DNA. The polypeptide is DNA ligase (Beijerinckia indica subsp. indica (strain ATCC 9039 / DSM 1715 / NCIMB 8712)).